The sequence spans 47 residues: Turripeptide Ici9.1 (47 aa).

3 disulfides stabilise this stretch: Cys1/Cys31, Cys5/Cys24, and Cys13/Cys45. One can recognise a Kazal-like domain in the interval 1–47 (CLSVCSMEYWPVCGSDGKTYPNECHLTSEACMSNTDITVAHVGKCDQ).

The protein belongs to the conopeptide P-like superfamily. As to expression, expressed by the venom duct.

The protein resides in the secreted. Acts as a neurotoxin by inhibiting an ion channel. May also act as a serine protease inhibitor, since it possess the kazal serine protease inhibitor signature. The sequence is that of Turripeptide Ici9.1 from Iotyrris cingulifera (Sea snail).